We begin with the raw amino-acid sequence, 541 residues long: T-complex protein 1 subunit epsilon (541 aa).

The residue at position 2 (A2) is an N-acetylalanine. A Glycyl lysine isopeptide (Lys-Gly) (interchain with G-Cter in SUMO2) cross-link involves residue K20. Phosphoserine is present on S26. Residue G53 coordinates ADP. G53 is a binding site for ATP. D104 serves as a coordination point for Mg(2+). Residues G105, T106, T107, and S175 each contribute to the ADP site. T106 and T107 together coordinate ATP. Glycyl lysine isopeptide (Lys-Gly) (interchain with G-Cter in SUMO2) cross-links involve residues K210, K214, K265, K275, and K279. Position 346 is a phosphoserine (S346). K392 participates in a covalent cross-link: Glycyl lysine isopeptide (Lys-Gly) (interchain with G-Cter in SUMO2). Residues G422, D492, E508, and K513 each contribute to the ADP site. G422 lines the ATP pocket. S539 is subject to Phosphoserine.

It belongs to the TCP-1 chaperonin family. Component of the chaperonin-containing T-complex (TRiC), a hexadecamer composed of two identical back-to-back stacked rings enclosing a protein folding chamber. Each ring is made up of eight different subunits: TCP1/CCT1, CCT2, CCT3, CCT4, CCT5, CCT6A/CCT6, CCT7, CCT8. Interacts with PACRG. Interacts with DNAAF4. Interacts with DLEC1. Interacts with SPMAP2. In terms of processing, ubiquitinated by the DCX(DCAF12) complex specifically recognizes the diglutamate (Glu-Glu) at the C-terminus, leading to its degradation.

It localises to the cytoplasm. The protein localises to the cytoskeleton. Its subcellular location is the microtubule organizing center. It is found in the centrosome. It carries out the reaction ATP + H2O = ADP + phosphate + H(+). Component of the chaperonin-containing T-complex (TRiC), a molecular chaperone complex that assists the folding of actin, tubulin and other proteins upon ATP hydrolysis. The TRiC complex mediates the folding of WRAP53/TCAB1, thereby regulating telomere maintenance. As part of the TRiC complex may play a role in the assembly of BBSome, a complex involved in ciliogenesis regulating transports vesicles to the cilia. In Pongo abelii (Sumatran orangutan), this protein is T-complex protein 1 subunit epsilon (CCT5).